The primary structure comprises 281 residues: Hexaprenyl pyrophosphate synthase (281 aa).

The isopentenyl diphosphate site is built by Lys42, Arg45, and His74. Residues Asp81 and Asp85 each contribute to the Mg(2+) site. Arg91 provides a ligand contact to isopentenyl diphosphate.

The protein belongs to the FPP/GGPP synthase family. In terms of assembly, homodimer. Requires Mg(2+) as cofactor.

It carries out the reaction 2 isopentenyl diphosphate + (2E,6E,10E)-geranylgeranyl diphosphate = all-trans-hexaprenyl diphosphate + 2 diphosphate. Its function is as follows. Catalyzes consecutive E-type condensation of two isopentenyl pyrophosphate (IPP) molecules with an allylic substrate such as geranylgeranyl diphosphate (GGPP), farnesyl diphosphate (FPP) or geranyl diphosphate (GPP) to yield the medium-chain product trans-C30-hexaprenyl pyrophosphate (HexPP). GGPP is the physiological substrate. This chain is Hexaprenyl pyrophosphate synthase (gdS-2), found in Saccharolobus solfataricus (strain ATCC 35092 / DSM 1617 / JCM 11322 / P2) (Sulfolobus solfataricus).